Reading from the N-terminus, the 198-residue chain is Recombination protein RecR (198 aa).

Residues 57–72 form a C4-type zinc finger; it reads CSICGNLTDEDPCAIC. One can recognise a Toprim domain in the interval 80–175; the sequence is STILIVEDSR…KVTRLARGLA (96 aa).

The protein belongs to the RecR family.

In terms of biological role, may play a role in DNA repair. It seems to be involved in an RecBC-independent recombinational process of DNA repair. It may act with RecF and RecO. The polypeptide is Recombination protein RecR (Streptococcus gordonii (strain Challis / ATCC 35105 / BCRC 15272 / CH1 / DL1 / V288)).